Reading from the N-terminus, the 232-residue chain is Small ribosomal subunit protein uS2 (232 aa).

The protein belongs to the universal ribosomal protein uS2 family.

This chain is Small ribosomal subunit protein uS2, found in Natranaerobius thermophilus (strain ATCC BAA-1301 / DSM 18059 / JW/NM-WN-LF).